Here is a 302-residue protein sequence, read N- to C-terminus: 4-hydroxy-tetrahydrodipicolinate synthase (302 aa).

Residue threonine 55 participates in pyruvate binding. Tyrosine 144 acts as the Proton donor/acceptor in catalysis. The active-site Schiff-base intermediate with substrate is lysine 172. Position 214 (valine 214) interacts with pyruvate.

This sequence belongs to the DapA family. Homotetramer; dimer of dimers.

The protein resides in the cytoplasm. The enzyme catalyses L-aspartate 4-semialdehyde + pyruvate = (2S,4S)-4-hydroxy-2,3,4,5-tetrahydrodipicolinate + H2O + H(+). The protein operates within amino-acid biosynthesis; L-lysine biosynthesis via DAP pathway; (S)-tetrahydrodipicolinate from L-aspartate: step 3/4. Functionally, catalyzes the condensation of (S)-aspartate-beta-semialdehyde [(S)-ASA] and pyruvate to 4-hydroxy-tetrahydrodipicolinate (HTPA). The sequence is that of 4-hydroxy-tetrahydrodipicolinate synthase from Prochlorococcus marinus (strain SARG / CCMP1375 / SS120).